Consider the following 537-residue polypeptide: MKCNQCEQTAANDSCTNIGVCGKTDNVSHLQDVLIYALRRLAHAALSARAKGIIVPEIDFFTVQALFITLTNVNFDPNVIERFIEQAIINRKTFAQLRGCKIDNSTRPIEEVKSMMSMPTGIDDFHKDKNNCSAMQMLLYGLKGTSAYAYHAAVLGKDDPNLYEFIYEGLAAGFPDREGNIDKERTLSDWMDLVLRCGKSNLRAMELLESGNVESFGVPTSTKVSLGQKKGKAILVSGHDLKDLYDLLCQTEGTGINIYTHGEMLPAHGYPKLHAFTHLVGHYGTAWQNQHKEISLFPGPVLFTTNCIQNPKEYIENVFTSGVTGWPGVQHCKDGDYSKLIERAKELPGFSEDVPGKELLTGFGKQSLLDAAPVILDSIKSGVLQHIFLVGGCDGAKPGRNYYSEFVEKAPDNTVVLTLGCGKFRFFDKDLGMIGSLPRLIDMGQCNDAYAALQVVTALAEILDCGVNDLPVSLVLSWYEQKAVSILLTLLAAGVKGIRLGPSLPSFVSEDILQLLVKEWGIAPITTPDKDIALLMQ.

The [4Fe-4S] cluster site is built by cysteine 3, cysteine 6, cysteine 15, and cysteine 21. Residues histidine 239, glutamate 263, cysteine 307, cysteine 393, cysteine 421, cysteine 446, glutamate 480, and lysine 482 each contribute to the hybrid [4Fe-2O-2S] cluster site. Cysteine 393 carries the cysteine persulfide modification.

It belongs to the HCP family. Requires [4Fe-4S] cluster as cofactor. It depends on hybrid [4Fe-2O-2S] cluster as a cofactor.

Its subcellular location is the cytoplasm. It carries out the reaction A + NH4(+) + H2O = hydroxylamine + AH2 + H(+). Catalyzes the reduction of hydroxylamine to form NH(3) and H(2)O. The sequence is that of Hydroxylamine reductase from Lawsonia intracellularis (strain PHE/MN1-00).